We begin with the raw amino-acid sequence, 534 residues long: Steroid hormone receptor family member cnr14 (534 aa).

Disordered regions lie at residues 30–53 and 119–139; these read SGKT…QWSH and PATS…GHTT. Over residues 119–130 the composition is skewed to low complexity; sequence PATSVTSSLSPP. The segment at residues 148 to 223 is a DNA-binding region (nuclear receptor); sequence ISFCKVCGDK…SGMSKDSVRQ (76 aa). 2 NR C4-type zinc fingers span residues 151–171 and 187–211; these read CKVC…CEGC and CLKQ…FKKC. The NR LBD domain maps to 252–493; the sequence is EVDAVYEAVL…PPLVVEMFQL (242 aa). A disordered region spans residues 502–534; sequence HNNQENQYTPAPEHQSPQPQQPTPNQQQTPVHC. The span at 511-534 shows a compositional bias: low complexity; it reads PAPEHQSPQPQQPTPNQQQTPVHC.

It belongs to the nuclear hormone receptor family. NR1 subfamily. As to expression, most abundant in embryos.

It localises to the nucleus. Its function is as follows. Transcriptional regulator which is involved in the sex determination and X chromosome dosage compensation pathways. Directly binds to five 5'-A(G/C)(G/T)(T/G)C(A/G)-3' sites in the promoter of sex-determining factor xol-1 to negatively regulate its expression and promote hermaphrodite development. Together with fox-1 is involved in making the distinction between one and two X-chromosomes. Plays a role in the fox-1-mediated repression of the functionally active isoform (isoform b) of the sex-determining factor xol-1 gene to promote hermaphrodite development. Plays a role in the association of the dosage compensation complex proteins dpy-27 and sdc-3 with the hermaphrodite X chromosomes. This Caenorhabditis elegans protein is Steroid hormone receptor family member cnr14.